A 291-amino-acid chain; its full sequence is 2-dehydro-3-deoxyphosphooctonate aldolase 2 (291 aa).

Alanine 2 is subject to N-acetylalanine.

The protein belongs to the KdsA family. In terms of tissue distribution, expressed in roots, apical meristem, emerging leaves, hydathodes of young leaves, styles of mature flowers and funicules of mature siliques.

The protein resides in the cytoplasm. It carries out the reaction D-arabinose 5-phosphate + phosphoenolpyruvate + H2O = 3-deoxy-alpha-D-manno-2-octulosonate-8-phosphate + phosphate. Its function is as follows. Catalyzes the stereospecific condensation of D-arabinose 5-phosphate and phosphoenolpyruvate to form 3-deoxy-D-manno-octulosonate 8-phosphate (KDO-8-phosphate) and inorganic phosphate. Involved in the biosynthesis of 3-deoxy-D-manno-octulosonate (KDO) which is an indispensable component of rhamnogalacturonan II (RG-II), a structurally complex pectic polysaccharide of the primary cell wall. RG-II is essential for the cell wall integrity of rapidly growing tissues and pollen tube growth and elongation. The sequence is that of 2-dehydro-3-deoxyphosphooctonate aldolase 2 (KDSA2) from Arabidopsis thaliana (Mouse-ear cress).